Consider the following 251-residue polypeptide: DNA repair protein RecO (251 aa).

Belongs to the RecO family.

Involved in DNA repair and RecF pathway recombination. The protein is DNA repair protein RecO of Acetivibrio thermocellus (strain ATCC 27405 / DSM 1237 / JCM 9322 / NBRC 103400 / NCIMB 10682 / NRRL B-4536 / VPI 7372) (Clostridium thermocellum).